The following is a 475-amino-acid chain: Doublecortin domain-containing protein 2 (475 aa).

Doublecortin domains lie at 17–100 (KSVL…LNYL) and 139–221 (CTIF…LPYS). The disordered stretch occupies residues 234–475 (YGQKASSLPP…ESNKASSAVA (242 aa)). A compositionally biased stretch (polar residues) spans 252 to 272 (GSGNYRQSKSTIGSSDNSSPQ). The residue at position 270 (serine 270) is a Phosphoserine. Residues 353 to 365 (EKTSKDANQKDDF) show a composition bias toward basic and acidic residues. Acidic residues predominate over residues 407-419 (TDEENGEELDQVT). A compositionally biased stretch (polar residues) spans 455-475 (TVTSPQENEGNESNKASSAVA).

Interacts with DVL1, DVL2 and DVL3. Expressed in hair cells of the inner ear.

It is found in the cell projection. The protein resides in the cilium. Its subcellular location is the cytoplasm. It localises to the cytoskeleton. The protein localises to the cilium axoneme. It is found in the kinocilium. Protein that plays a role in the inhibition of canonical Wnt signaling pathway. May be involved in neuronal migration during development of the cerebral neocortex. Involved in the control of ciliogenesis and ciliary length. This is Doublecortin domain-containing protein 2 (Dcdc2) from Rattus norvegicus (Rat).